The sequence spans 205 residues: Large ribosomal subunit protein uL4 (205 aa).

Residues 44–77 form a disordered region; that stretch reads KRQGTSKVKNRSAVRGGGKKPWRQKGTGRARQGS. The segment covering 51–71 has biased composition (basic residues); that stretch reads VKNRSAVRGGGKKPWRQKGTG.

This sequence belongs to the universal ribosomal protein uL4 family. Part of the 50S ribosomal subunit.

One of the primary rRNA binding proteins, this protein initially binds near the 5'-end of the 23S rRNA. It is important during the early stages of 50S assembly. It makes multiple contacts with different domains of the 23S rRNA in the assembled 50S subunit and ribosome. Its function is as follows. Forms part of the polypeptide exit tunnel. The chain is Large ribosomal subunit protein uL4 from Lactobacillus delbrueckii subsp. bulgaricus (strain ATCC 11842 / DSM 20081 / BCRC 10696 / JCM 1002 / NBRC 13953 / NCIMB 11778 / NCTC 12712 / WDCM 00102 / Lb 14).